Here is a 671-residue protein sequence, read N- to C-terminus: MEPIEQQLTELRTTLRHHEYLYHVMDAPEIPDAEYDRLMRELRELEAQRPDLITPDSPTQRVGAAPLTAFNQIRHEVPMLSLDNVFDEESFLAFNKRVQDRLKSTENVIWCCELKLDGLAVSILYENGVLVSAATRGDGTTGEDITSNVRTIRAIPLKLHGDNIPARLEVRGEVFLPQAGFEKINEDARRTGGKVFANPRNAAAGSLRQLDPRITAKRPLTFFCYGVGILEGGELPDTHLGRLLQFKAWGLPVSDRVTLCDSPQAVLDFYHNVEKDRPTLGFDIDGVVIKVNSLALQEQLGFVARAPRWAVAFKFPAQEQMTFVRDVEFQVGRTGAITPVARLEPVQVAGVLVSNATLHNADEIERLGLRIGDKVVIRRAGDVIPQVVNVVLSERPEETRPIVFPTHCPVCGSDVERVEGEAVTRCTGGLICSAQRKESLKHFVSRRAMDVDGMGDKIIDQLVEREYVHTPADLFRLTAGKLTGLDRMGPKSAQNVVNALEKAKATTFARFLYALGIREVGEATAAGLAAYFGTLEALQAATIDELQKVPDVGIVVATHVFNFFAEESNRDVIGQLLAEGVHWPAPVVINVQEIDSPFAGKTVVLTGSLSQMSRDDAKARLVALGAKVAGSVSKKTDLVIAGEAAGSKLAKAQELGITVIDEAEMIRLLGA.

Residues 32–36 (DAEYD), 81–82 (SL), and Glu113 contribute to the NAD(+) site. Lys115 serves as the catalytic N6-AMP-lysine intermediate. 4 residues coordinate NAD(+): Arg136, Glu173, Lys290, and Lys314. 4 residues coordinate Zn(2+): Cys408, Cys411, Cys426, and Cys432. The BRCT domain occupies 593-671 (EIDSPFAGKT…EAEMIRLLGA (79 aa)).

The protein belongs to the NAD-dependent DNA ligase family. LigA subfamily. Mg(2+) serves as cofactor. The cofactor is Mn(2+).

The catalysed reaction is NAD(+) + (deoxyribonucleotide)n-3'-hydroxyl + 5'-phospho-(deoxyribonucleotide)m = (deoxyribonucleotide)n+m + AMP + beta-nicotinamide D-nucleotide.. DNA ligase that catalyzes the formation of phosphodiester linkages between 5'-phosphoryl and 3'-hydroxyl groups in double-stranded DNA using NAD as a coenzyme and as the energy source for the reaction. It is essential for DNA replication and repair of damaged DNA. The chain is DNA ligase from Salmonella paratyphi B (strain ATCC BAA-1250 / SPB7).